A 362-amino-acid chain; its full sequence is Serine/threonine-protein kinase-like protein At3g51990 (362 aa).

The first 24 residues, Met-1–Gly-24, serve as a signal peptide directing secretion. Residues Ser-21–Ala-32 show a composition bias toward low complexity. Positions Ser-21 to Arg-43 are disordered. The 271-residue stretch at Phe-59–Leu-329 folds into the Protein kinase domain. ATP is bound by residues Leu-65 to Val-73 and Lys-86. A glycan (N-linked (GlcNAc...) asparagine) is linked at Asn-136. Asp-185 (proton acceptor) is an active-site residue. Phosphoserine is present on Ser-219. Phosphothreonine is present on residues Thr-220 and Thr-225. Tyr-233 carries the post-translational modification Phosphotyrosine.

The protein belongs to the protein kinase superfamily. Ser/Thr protein kinase family.

Its subcellular location is the secreted. It carries out the reaction L-seryl-[protein] + ATP = O-phospho-L-seryl-[protein] + ADP + H(+). The enzyme catalyses L-threonyl-[protein] + ATP = O-phospho-L-threonyl-[protein] + ADP + H(+). The sequence is that of Serine/threonine-protein kinase-like protein At3g51990 from Arabidopsis thaliana (Mouse-ear cress).